Reading from the N-terminus, the 1039-residue chain is FERM domain-containing protein 4A (1039 aa).

Positions 20 to 322 constitute an FERM domain; the sequence is RRCQVHLLDD…SQHQFYLDRK (303 aa). A necessary for interaction with CYTH1 region spans residues 358 to 420; it reads KGKIISGSSG…KLCLREAELT (63 aa). The segment covering 366–382 has biased composition (low complexity); the sequence is SGSLLSSGSQESDSSQS. Residues 366–386 form a disordered region; the sequence is SGSLLSSGSQESDSSQSAKKD. The stretch at 382-416 forms a coiled coil; it reads SAKKDMLAALKSRQEALEETLRQRLEELKKLCLRE. Residue Ser-530 is modified to Phosphoserine. The interval 553–680 is disordered; it reads DEDSQVTSTI…MPSTPDLRVR (128 aa). The span at 571–586 shows a compositional bias: pro residues; it reads GLPPRPPSHNRPPPPQ. The necessary for tight junction and adherens junction localization; Requires for interaction with PARD3 stretch occupies residues 579–939; that stretch reads HNRPPPPQSL…QWYQRSTASH (361 aa). Ser-604 and Ser-615 each carry phosphoserine. Positions 623-638 are enriched in basic residues; that stretch reads VKKRSSHSHSSSHKRF. Ser-681 and Ser-711 each carry phosphoserine. Disordered regions lie at residues 713–756 and 772–813; these read ESQG…HSSS and AEDS…AGGA. Positions 788-800 are enriched in low complexity; the sequence is RAAGALGSASSGS. Residues Ser-800, Ser-872, and Ser-901 each carry the phosphoserine modification. 2 disordered regions span residues 879–968 and 980–1039; these read FKES…STFV and CKAT…STDE. Over residues 896 to 905 the composition is skewed to polar residues; the sequence is LTPSRSQILR. The span at 912–929 shows a compositional bias: basic and acidic residues; that stretch reads EGAHDKGAGRAAVSDELR. The span at 946–966 shows a compositional bias: low complexity; the sequence is SHTSSTSSDSGSQYSTSSQST. Polar residues-rich tracts occupy residues 986–1000 and 1013–1023; these read ALPQ…SSEI and TWQTGEATENS.

In terms of assembly, interacts (via coiled-coil domain) with CYTH1 (via coiled-coil domain). Interacts with PARD3 (via coiled-coil domain). Found in a complex with PARD3, CYTH1 and FRMD4A. Interacts with CYTH2. Interacts with CYTH3.

It is found in the cytoplasm. It localises to the cytoskeleton. The protein localises to the cell junction. Its subcellular location is the adherens junction. The protein resides in the tight junction. Functionally, scaffolding protein that regulates epithelial cell polarity by connecting ARF6 activation with the PAR3 complex. Plays a redundant role with FRMD4B in epithelial polarization. May regulate MAPT secretion by activating ARF6-signaling. This Homo sapiens (Human) protein is FERM domain-containing protein 4A.